The chain runs to 273 residues: Probable NAD(P)H dehydrogenase (quinone) FQR1-like 2 (273 aa).

The segment at 1–60 (MGKGGGCVPSKKKKPATTGDGPGIDDDNDATNAPIQIDDDQTTIDGDRTTATNTGGTTTP) is disordered. A compositionally biased stretch (low complexity) spans 49 to 60 (TTATNTGGTTTP). The Flavodoxin-like domain maps to 75-263 (IFVVFYSMYG…ALAEHQGNYM (189 aa)). Residues 81-85 (SMYGH), 183-236 (FFVS…SPYG), and histidine 207 each bind FMN. Tyrosine 83 lines the NAD(+) pocket.

It belongs to the WrbA family. FMN serves as cofactor.

The protein resides in the cell membrane. The catalysed reaction is a quinone + NADH + H(+) = a quinol + NAD(+). It carries out the reaction a quinone + NADPH + H(+) = a quinol + NADP(+). In terms of biological role, catalyzes the transfer of electrons from NADH and NADPH to reduce quinone to the hydroquinone state. This Arabidopsis thaliana (Mouse-ear cress) protein is Probable NAD(P)H dehydrogenase (quinone) FQR1-like 2.